Here is a 359-residue protein sequence, read N- to C-terminus: Peptide chain release factor 1 (359 aa).

The residue at position 235 (Gln235) is an N5-methylglutamine. A disordered region spans residues 284–311 (KAESERSASRKNQVGSGDRSERIRTYNF).

Belongs to the prokaryotic/mitochondrial release factor family. Post-translationally, methylated by PrmC. Methylation increases the termination efficiency of RF1.

The protein resides in the cytoplasm. Its function is as follows. Peptide chain release factor 1 directs the termination of translation in response to the peptide chain termination codons UAG and UAA. This is Peptide chain release factor 1 from Bartonella quintana (strain Toulouse) (Rochalimaea quintana).